Reading from the N-terminus, the 206-residue chain is Sclerostin domain-containing protein 1 (206 aa).

Residues 1–23 form the signal peptide; that stretch reads MLPPAIHLSLIPLLCILMKNCLA. A disordered region spans residues 42 to 62; it reads AHPSSNSTLNQARNGGRHFSS. Over residues 43–62 the composition is skewed to polar residues; the sequence is HPSSNSTLNQARNGGRHFSS. Asn47 is a glycosylation site (N-linked (GlcNAc...) asparagine). 4 disulfides stabilise this stretch: Cys75-Cys133, Cys89-Cys147, Cys100-Cys163, and Cys104-Cys165. One can recognise a CTCK domain in the interval 75 to 170; it reads CRELRSTKYI…TACKCKRYTR (96 aa). Asn173 carries N-linked (GlcNAc...) asparagine glycosylation. The disordered stretch occupies residues 176 to 206; that stretch reads SHNFESVSPAKPAQHHRERKRASKSSKHSLS. The segment covering 188-206 has biased composition (basic residues); it reads AQHHRERKRASKSSKHSLS.

The protein belongs to the sclerostin family. Interacts with BMP2, BMP4, BMP6 and BMP7 with high affinity. In terms of tissue distribution, highly expressed within the maximally sensitized/receptive endometrium. Weakly expressed in brain, kidney and the female reproductive tract. Expressed in the dermal papilla (DP) and at high level in the precortex of both anagen vibrissae and pelage follicles. Dynymic expression during the hair cycle.

The protein resides in the secreted. Functionally, directly antagonizes activity of BMP2, BMP4, BMP6 and BMP7 in a dose-dependent manner. May be involved in the onset of endometrial receptivity for implantation/sensitization for the decidual cell reaction. Enhances Wnt signaling and inhibits TGF-beta signaling. The chain is Sclerostin domain-containing protein 1 (Sostdc1) from Rattus norvegicus (Rat).